Reading from the N-terminus, the 36-residue chain is DEEPKETCSDDMCVIYCKGEEFSTGACDGPQKCKCS.

3 disulfide bridges follow: Cys-8–Cys-27, Cys-13–Cys-33, and Cys-17–Cys-35.

This sequence belongs to the short scorpion toxin superfamily. Potassium channel inhibitor family. Alpha-KTx 11 subfamily. In terms of tissue distribution, expressed by the venom gland.

It is found in the secreted. Functionally, binds and inhibits voltage-sensitive potassium channels. Inhibits the vertebrate potassium channel Kv1.1/KCNA1 with low affinity. The protein is Potassium channel toxin alpha-KTx 11.3 of Parabuthus granulatus (Granulated thick-tailed scorpion).